Reading from the N-terminus, the 160-residue chain is UPF0262 protein Oant_0325 (160 aa).

The protein belongs to the UPF0262 family.

The chain is UPF0262 protein Oant_0325 from Brucella anthropi (strain ATCC 49188 / DSM 6882 / CCUG 24695 / JCM 21032 / LMG 3331 / NBRC 15819 / NCTC 12168 / Alc 37) (Ochrobactrum anthropi).